The primary structure comprises 795 residues: Phenylalanine--tRNA ligase beta subunit (795 aa).

The tRNA-binding domain maps to 39–148; that stretch reads AGEFNGVVVG…ADAPVGKDFR (110 aa). In terms of domain architecture, B5 spans 401–476; it reads PKLNKVQLRR…RIYGYNSIPN (76 aa). Mg(2+) contacts are provided by Asp-454, Asp-460, Glu-463, and Glu-464. In terms of domain architecture, FDX-ACB spans 701–794; the sequence is SKFPANKRDL…LKDRFNAYLR (94 aa).

Belongs to the phenylalanyl-tRNA synthetase beta subunit family. Type 1 subfamily. As to quaternary structure, tetramer of two alpha and two beta subunits. It depends on Mg(2+) as a cofactor.

The protein resides in the cytoplasm. It carries out the reaction tRNA(Phe) + L-phenylalanine + ATP = L-phenylalanyl-tRNA(Phe) + AMP + diphosphate + H(+). The sequence is that of Phenylalanine--tRNA ligase beta subunit from Mannheimia succiniciproducens (strain KCTC 0769BP / MBEL55E).